A 239-amino-acid chain; its full sequence is ATP synthase subunit a (239 aa).

The next 5 helical transmembrane spans lie at Gly-27–Gly-47, Leu-86–Ile-106, Ile-125–Ser-145, Leu-190–Leu-210, and Gly-211–Gly-231.

Belongs to the ATPase A chain family. F-type ATPases have 2 components, CF(1) - the catalytic core - and CF(0) - the membrane proton channel. CF(1) has five subunits: alpha(3), beta(3), gamma(1), delta(1), epsilon(1). CF(0) has four main subunits: a, b, b' and c.

It localises to the cellular thylakoid membrane. In terms of biological role, key component of the proton channel; it plays a direct role in the translocation of protons across the membrane. This Synechococcus sp. (strain RCC307) protein is ATP synthase subunit a.